A 210-amino-acid polypeptide reads, in one-letter code: Urease accessory protein UreF (210 aa).

Belongs to the UreF family. As to quaternary structure, ureD, UreF and UreG form a complex that acts as a GTP-hydrolysis-dependent molecular chaperone, activating the urease apoprotein by helping to assemble the nickel containing metallocenter of UreC. The UreE protein probably delivers the nickel.

It localises to the cytoplasm. In terms of biological role, required for maturation of urease via the functional incorporation of the urease nickel metallocenter. This chain is Urease accessory protein UreF, found in Cereibacter sphaeroides (strain KD131 / KCTC 12085) (Rhodobacter sphaeroides).